Here is a 334-residue protein sequence, read N- to C-terminus: ADP-L-glycero-D-manno-heptose-6-epimerase (334 aa).

NADP(+)-binding positions include 11–12, 32–33, Lys-39, Lys-54, 77–81, and Asn-94; these read FI, DN, and QGACS. The active-site Proton acceptor is Tyr-141. Lys-145 contacts NADP(+). Asn-171 contacts substrate. Residues Val-172 and Lys-180 each contribute to the NADP(+) site. The active-site Proton acceptor is the Lys-180. Substrate-binding positions include Arg-182, His-189, 203 to 206, Arg-216, and Tyr-295; that span reads FGSN.

Belongs to the NAD(P)-dependent epimerase/dehydratase family. HldD subfamily. In terms of assembly, homopentamer. Requires NADP(+) as cofactor.

The catalysed reaction is ADP-D-glycero-beta-D-manno-heptose = ADP-L-glycero-beta-D-manno-heptose. It functions in the pathway nucleotide-sugar biosynthesis; ADP-L-glycero-beta-D-manno-heptose biosynthesis; ADP-L-glycero-beta-D-manno-heptose from D-glycero-beta-D-manno-heptose 7-phosphate: step 4/4. It participates in bacterial outer membrane biogenesis; LOS core biosynthesis. Its function is as follows. Catalyzes the interconversion between ADP-D-glycero-beta-D-manno-heptose and ADP-L-glycero-beta-D-manno-heptose via an epimerization at carbon 6 of the heptose. The protein is ADP-L-glycero-D-manno-heptose-6-epimerase of Neisseria meningitidis serogroup A / serotype 4A (strain DSM 15465 / Z2491).